A 160-amino-acid polypeptide reads, in one-letter code: Phosphopantetheine adenylyltransferase (160 aa).

Serine 10 is a binding site for substrate. ATP contacts are provided by residues 10-11 (SF) and histidine 18. Residues lysine 42, threonine 74, and arginine 88 each contribute to the substrate site. Residues 89–91 (GLR), glutamate 99, and 124–130 (FYYISSR) each bind ATP.

This sequence belongs to the bacterial CoaD family. In terms of assembly, homohexamer. Mg(2+) is required as a cofactor.

It localises to the cytoplasm. It catalyses the reaction (R)-4'-phosphopantetheine + ATP + H(+) = 3'-dephospho-CoA + diphosphate. It functions in the pathway cofactor biosynthesis; coenzyme A biosynthesis; CoA from (R)-pantothenate: step 4/5. Functionally, reversibly transfers an adenylyl group from ATP to 4'-phosphopantetheine, yielding dephospho-CoA (dPCoA) and pyrophosphate. The polypeptide is Phosphopantetheine adenylyltransferase (Bdellovibrio bacteriovorus (strain ATCC 15356 / DSM 50701 / NCIMB 9529 / HD100)).